Reading from the N-terminus, the 187-residue chain is NADH-dependent FMN reductase SfnF (187 aa).

It belongs to the SsuE family.

It carries out the reaction FMNH2 + NAD(+) = FMN + NADH + 2 H(+). Functionally, involved in the dimethyl sulfide degradation pathway. Catalyzes the NADH-dependent reduction of FMN. The polypeptide is NADH-dependent FMN reductase SfnF (Pseudomonas fluorescens (strain Pf0-1)).